Consider the following 98-residue polypeptide: MNQERVFKVLLGPHMTEKAAFAAENNQYVFKVAQDATKPEIKKAVEALFEKKVAGVQVLNVKGKTKRTQHGLGLRKGYRKAYVTLAAGETLEDFSGAE.

The protein belongs to the universal ribosomal protein uL23 family. As to quaternary structure, part of the 50S ribosomal subunit. Contacts protein L29, and trigger factor when it is bound to the ribosome.

Its function is as follows. One of the early assembly proteins it binds 23S rRNA. One of the proteins that surrounds the polypeptide exit tunnel on the outside of the ribosome. Forms the main docking site for trigger factor binding to the ribosome. The protein is Large ribosomal subunit protein uL23 of Chromohalobacter salexigens (strain ATCC BAA-138 / DSM 3043 / CIP 106854 / NCIMB 13768 / 1H11).